A 132-amino-acid chain; its full sequence is NADPH-dependent 7-cyano-7-deazaguanine reductase (132 aa).

Catalysis depends on Cys48, which acts as the Thioimide intermediate. The Proton donor role is filled by Asp55. Residues 70-72 (LEL) and 89-90 (ME) each bind substrate.

Belongs to the GTP cyclohydrolase I family. QueF type 1 subfamily.

Its subcellular location is the cytoplasm. It catalyses the reaction 7-aminomethyl-7-carbaguanine + 2 NADP(+) = 7-cyano-7-deazaguanine + 2 NADPH + 3 H(+). It functions in the pathway tRNA modification; tRNA-queuosine biosynthesis. In terms of biological role, catalyzes the NADPH-dependent reduction of 7-cyano-7-deazaguanine (preQ0) to 7-aminomethyl-7-deazaguanine (preQ1). The protein is NADPH-dependent 7-cyano-7-deazaguanine reductase of Elusimicrobium minutum (strain Pei191).